We begin with the raw amino-acid sequence, 471 residues long: Probable anion transporter 5, chloroplastic (471 aa).

The transit peptide at 1–59 directs the protein to the chloroplast; the sequence is MAASASASALQAERCLLVGVGAGPRRHRLPLRMPPPLHAPPALLLLPHRRRRRWPPAVR. The segment at 56-76 is disordered; the sequence is PAVRASPGEGGGGGGGGGGGG. The next 4 helical transmembrane spans lie at 62-82, 103-123, 162-182, and 185-205; these read PGEG…AGAL, IGVV…GFMP, VVFG…PPII, and LGWE…CLGF. Residues 63–76 are compositionally biased toward gly residues; sequence GEGGGGGGGGGGGG. A disordered region spans residues 226–247; that stretch reads GQSPSGSSDLISSSVSPKSSES. The span at 228–247 shows a compositional bias: low complexity; the sequence is SPSGSSDLISSSVSPKSSES. 6 helical membrane passes run 270–290, 307–327, 348–368, 371–391, 403–423, and 435–455; these read VWAM…CLSW, AWVS…AAPF, IAFL…GVPP, IVAF…GLYC, ILLG…VALT, and ISLF…WLAF.

This sequence belongs to the major facilitator superfamily. Sodium/anion cotransporter (TC 2.A.1.14) family.

It localises to the plastid. The protein resides in the chloroplast membrane. Functionally, probable anion transporter. This chain is Probable anion transporter 5, chloroplastic (PHT4;5), found in Oryza sativa subsp. japonica (Rice).